Here is a 295-residue protein sequence, read N- to C-terminus: Signal-transducing adaptor protein 1 (295 aa).

The region spanning 25–121 is the PH domain; the sequence is PLYFEGFLLI…WRGFILTVTE (97 aa). A Phosphotyrosine modification is found at tyrosine 168. Positions 177–280 constitute an SH2 domain; that stretch reads ACFYTVSRKE…TDENTGQEPS (104 aa). The disordered stretch occupies residues 270–295; the sequence is STDENTGQEPSMEGRSEKLKKNPHIA.

As to quaternary structure, interacts with KIT and CSF1R. Interacts with URI1; the interaction is phosphorylation-dependent and occurs in a growth-dependent manner. Phosphorylated on tyrosine by TEC. Phosphorylated on tyrosine by KIT.

The protein localises to the nucleus. It is found in the cytoplasm. The protein resides in the mitochondrion. In BCR signaling, appears to function as a docking protein acting downstream of TEC and participates in a positive feedback loop by increasing the activity of TEC. The protein is Signal-transducing adaptor protein 1 (STAP1) of Homo sapiens (Human).